We begin with the raw amino-acid sequence, 481 residues long: Regulator of G-protein signaling 1 (481 aa).

A disordered region spans residues 1-31 (MPALHNPSSPPPSYEAVTSYRNGNSIDSGDK). The interval 33 to 227 (QQCSRLMKIT…SVHEIGKSKN (195 aa)) is fungal-DR. Residues 232-312 (PVYSVSSPSP…KGVSYFLTGK (81 aa)) enclose the DEP domain. Residues 344–474 (ILETILRKPN…AGDSLLKFLE (131 aa)) enclose the RGS domain.

Its subcellular location is the nucleus. It is found in the cytoplasm. Negatively regulates pheromone signaling during mating. Acts in a negative feedback loop that is essential for the mating process. This loop acts to down-regulate cellular sensitivity to pheromone. Activated by ste11. This chain is Regulator of G-protein signaling 1 (rgs1), found in Schizosaccharomyces pombe (strain 972 / ATCC 24843) (Fission yeast).